The sequence spans 126 residues: Mating-type protein A1 (126 aa).

The segment at residues 70 to 126 (SPKGKSSISPQARAFLEQVFRRKQSLNSKEKEEVAKKCGITPLQVRVWFINKRMRSK) is a DNA-binding region (homeobox).

This sequence belongs to the MATA1 family. Binds DNA with a high specificity as a heterodimer of A1 and ALPHA2.

It is found in the nucleus. Functionally, mating type proteins are sequence specific DNA-binding proteins that act as master switches in yeast differentiation by controlling gene expression in a cell type-specific fashion. Transcriptional corepressor that, in a/alpha diploid cells, binds cooperatively with the ALPHA2 protein to a 21-bp DNA sequence termed the haploid-specific gene (hsg) operator, to repress transcription of haploid-specific genes and of MATALPHA1. This Saccharomyces cerevisiae (Baker's yeast) protein is Mating-type protein A1 (MATA1).